We begin with the raw amino-acid sequence, 446 residues long: Glutamine synthetase (446 aa).

A GS beta-grasp domain is found at 14–107; sequence NNVKFLRFQF…IICDVYRKNG (94 aa). One can recognise a GS catalytic domain in the interval 114 to 446; the sequence is PRGCLKRVLA…DWEFNKYVRI (333 aa). The Mg(2+) site is built by glutamate 138 and glutamate 140. ATP is bound at residue glutamate 187. Residues glutamate 192 and glutamate 199 each coordinate Mg(2+). Residues 243–244 and glycine 244 each bind L-glutamate; that span reads NG. Position 248 (histidine 248) interacts with Mg(2+). Serine 252 contacts ATP. L-glutamate contacts are provided by arginine 301, glutamate 307, and arginine 319. 3 residues coordinate ATP: arginine 319, arginine 324, and lysine 331. Position 336 (glutamate 336) interacts with Mg(2+). Arginine 338 is an L-glutamate binding site.

Belongs to the glutamine synthetase family. Oligomer of 12 subunits arranged in the form of two hexagons. Mg(2+) is required as a cofactor.

Its subcellular location is the cytoplasm. The catalysed reaction is L-glutamate + NH4(+) + ATP = L-glutamine + ADP + phosphate + H(+). Functionally, probably involved in nitrogen metabolism via ammonium assimilation. Catalyzes the ATP-dependent biosynthesis of glutamine from glutamate and ammonia. This is Glutamine synthetase from Methanococcus voltae.